Here is a 603-residue protein sequence, read N- to C-terminus: Protein Spindly (603 aa).

Methionine 1 bears the N-acetylmethionine mark. A coiled-coil region spans residues 1-442 (MESDVIADLR…LKLKYEPEEK (442 aa)). A phosphoserine mark is found at serine 513 and serine 553. A disordered region spans residues 542–577 (ALSERSRNTPNSPRLAAESRLQREVKQGKETASKLE). The segment covering 561–577 (RLQREVKQGKETASKLE) has biased composition (basic and acidic residues).

It belongs to the Spindly family. In terms of assembly, interacts with KNTC1 and ZW10. These interactions appear weak and may be transient or indirect. Interacts with dynein intermediate chain and dynactin (DCTN1). Interacts with the catalytically active form of USP45. In terms of processing, monoubiquitinated with'Lys-48' linkage. Deubiquitinated by USP45.

It is found in the cytoplasm. The protein resides in the cytoskeleton. The protein localises to the microtubule organizing center. It localises to the centrosome. Its subcellular location is the chromosome. It is found in the centromere. The protein resides in the kinetochore. The protein localises to the nucleus. It localises to the spindle pole. Required for the localization of dynein and dynactin to the mitotic kintochore. Dynein is believed to control the initial lateral interaction between the kinetochore and spindle microtubules and to facilitate the subsequent formation of end-on kinetochore-microtubule attachments mediated by the NDC80 complex. Also required for correct spindle orientation. Does not appear to be required for the removal of spindle assembly checkpoint (SAC) proteins from the kinetochore upon bipolar spindle attachment. Acts as an adapter protein linking the dynein motor complex to various cargos and converts dynein from a non-processive to a highly processive motor in the presence of dynactin. Facilitates the interaction between dynein and dynactin and activates dynein processivity (the ability to move along a microtubule for a long distance without falling off the track). Plays a role in cell migration. This chain is Protein Spindly, found in Bos taurus (Bovine).